Consider the following 182-residue polypeptide: Transmembrane protein 11 homolog, mitochondrial (182 aa).

Ser25 is modified (phosphoserine). Helical transmembrane passes span 70–89 (TAVA…RDRP) and 91–108 (IAAP…LYTV).

This sequence belongs to the TMEM11 family.

It is found in the mitochondrion inner membrane. Its function is as follows. Plays a role in mitochondrial morphogenesis. The sequence is that of Transmembrane protein 11 homolog, mitochondrial (Pmi) from Drosophila melanogaster (Fruit fly).